A 400-amino-acid chain; its full sequence is 1-deoxy-D-xylulose 5-phosphate reductoisomerase (400 aa).

The NADPH site is built by Thr-17, Gly-18, Ser-19, Ile-20, and Asn-131. Lys-132 serves as a coordination point for 1-deoxy-D-xylulose 5-phosphate. An NADPH-binding site is contributed by Glu-133. Asp-157 is a Mn(2+) binding site. Positions 158, 159, 188, and 211 each coordinate 1-deoxy-D-xylulose 5-phosphate. Glu-159 contributes to the Mn(2+) binding site. Gly-217 serves as a coordination point for NADPH. Ser-224, Asn-229, Lys-230, and Glu-233 together coordinate 1-deoxy-D-xylulose 5-phosphate. Glu-233 serves as a coordination point for Mn(2+).

It belongs to the DXR family. Mg(2+) serves as cofactor. It depends on Mn(2+) as a cofactor.

It catalyses the reaction 2-C-methyl-D-erythritol 4-phosphate + NADP(+) = 1-deoxy-D-xylulose 5-phosphate + NADPH + H(+). It participates in isoprenoid biosynthesis; isopentenyl diphosphate biosynthesis via DXP pathway; isopentenyl diphosphate from 1-deoxy-D-xylulose 5-phosphate: step 1/6. Its function is as follows. Catalyzes the NADPH-dependent rearrangement and reduction of 1-deoxy-D-xylulose-5-phosphate (DXP) to 2-C-methyl-D-erythritol 4-phosphate (MEP). This chain is 1-deoxy-D-xylulose 5-phosphate reductoisomerase, found in Pseudomonas putida (strain ATCC 47054 / DSM 6125 / CFBP 8728 / NCIMB 11950 / KT2440).